The sequence spans 131 residues: Thrombocorticin (131 aa).

A disulfide bridge links C3 with C111. A disordered region spans residues 28–60 (RNESVEVKDSNGNTVSRGSGSSSSGGTFTVINM). Low complexity predominate over residues 37–54 (SNGNTVSRGSGSSSSGGT). The Pseudodomain-swapping motif motif lies at 117–131 (DFNDVFVLITGLVRG).

Its function is as follows. Binds to fucose and mannose in a calcium-dependent manner (in vitro). Acts as an agonist for human thrombopoietin receptor MPL (in vitro). Binding of sugar-moieties may promote the interaction with human MPL on the cell surface (in vitro). Catalyzes MPL dimerization and activation, and modulates internalization of the receptor (in vitro). Exhibits proliferation activity in murine recombinant Ba/F3 cells expressing human MPL (Ba/F3-huMPL) (in vitro). Induces phosphorylation of STAT5 in recombinant Ba/F3-huMPL cells, possibly by stimulating MPL on the cell surface to transduce signals via Jak/STAT signaling pathway (in vitro). Does not aggregate rabbit erythrocytes, indicating absent lectin-like agglutination activity (in vitro). This is Thrombocorticin from Corticium sp. (Marine sponge).